The following is a 165-amino-acid chain: Large ribosomal subunit protein uL11 (165 aa).

It belongs to the universal ribosomal protein uL11 family. As to quaternary structure, component of the large ribosomal subunit. Mature ribosomes consist of a small (40S) and a large (60S) subunit. The 40S subunit contains about 32 different proteins and 1 molecule of RNA (18S). The 60S subunit contains 45 different proteins and 3 molecules of RNA (25S, 5.8S and 5S).

The protein resides in the cytoplasm. Its function is as follows. Component of the ribosome, a large ribonucleoprotein complex responsible for the synthesis of proteins in the cell. The small ribosomal subunit (SSU) binds messenger RNAs (mRNAs) and translates the encoded message by selecting cognate aminoacyl-transfer RNA (tRNA) molecules. The large subunit (LSU) contains the ribosomal catalytic site termed the peptidyl transferase center (PTC), which catalyzes the formation of peptide bonds, thereby polymerizing the amino acids delivered by tRNAs into a polypeptide chain. The nascent polypeptides leave the ribosome through a tunnel in the LSU and interact with protein factors that function in enzymatic processing, targeting, and the membrane insertion of nascent chains at the exit of the ribosomal tunnel. The sequence is that of Large ribosomal subunit protein uL11 (RPL12) from Candida albicans (strain SC5314 / ATCC MYA-2876) (Yeast).